A 295-amino-acid polypeptide reads, in one-letter code: MNESESELQARLLAKALPFMQRYENKTIVVKYGGHAMGNPELGKAFASDIALLKQSGVNPIVVHGGGPQIGAMLNKMGIESKFEGGLRVTDQKTVEIVEMVLAGSINKEIVALINQTGEWAIGLCGKDGNMVFAEKARKTVKDPDSNIERVLDLGFVGEVVEVDRTLLDLLARSEMIPVIAPVAPGRDGATYNINADTFAGAIAGALNATRLLFLTDVAGVLDKNGQLIKELSVAEAHALIADGTISGGMIPKVETCIDAIKAGVQGVVILNGKTAHSVLLEIFTEHGIGTLIVP.

Residues 66-67 (GG), arginine 88, and asparagine 193 each bind substrate.

The protein belongs to the acetylglutamate kinase family. ArgB subfamily.

Its subcellular location is the cytoplasm. It catalyses the reaction N-acetyl-L-glutamate + ATP = N-acetyl-L-glutamyl 5-phosphate + ADP. It functions in the pathway amino-acid biosynthesis; L-arginine biosynthesis; N(2)-acetyl-L-ornithine from L-glutamate: step 2/4. Catalyzes the ATP-dependent phosphorylation of N-acetyl-L-glutamate. The sequence is that of Acetylglutamate kinase from Rhizobium leguminosarum bv. trifolii (strain WSM2304).